We begin with the raw amino-acid sequence, 142 residues long: Large ribosomal subunit protein bL17 (142 aa).

The protein belongs to the bacterial ribosomal protein bL17 family. In terms of assembly, part of the 50S ribosomal subunit. Contacts protein L32.

In Bartonella henselae (strain ATCC 49882 / DSM 28221 / CCUG 30454 / Houston 1) (Rochalimaea henselae), this protein is Large ribosomal subunit protein bL17.